The sequence spans 584 residues: Acetylcholinesterase (584 aa).

Alanine 1 is a signal peptide. Cysteine 70 and cysteine 97 are oxidised to a cystine. The Acyl-ester intermediate role is filled by serine 204. A disulfide bond links cysteine 258 and cysteine 273. N-linked (GlcNAc...) asparagine glycosylation is present at asparagine 266. Residue glutamate 335 is the Charge relay system of the active site. N-linked (GlcNAc...) asparagine glycosylation is present at asparagine 351. Cysteine 410 and cysteine 530 form a disulfide bridge. The Charge relay system role is filled by histidine 448. An N-linked (GlcNAc...) asparagine glycan is attached at asparagine 465.

This sequence belongs to the type-B carboxylesterase/lipase family. Homotetramer; composed of disulfide-linked homodimers. Interacts with PRIMA1. The interaction with PRIMA1 is required to anchor it to the basal lamina of cells and organize into tetramers.

The protein localises to the synapse. It is found in the secreted. The protein resides in the cell membrane. It carries out the reaction acetylcholine + H2O = choline + acetate + H(+). Its function is as follows. Terminates signal transduction at the neuromuscular junction by rapid hydrolysis of the acetylcholine released into the synaptic cleft. The chain is Acetylcholinesterase (ACHE) from Oryctolagus cuniculus (Rabbit).